The primary structure comprises 100 residues: Small ubiquitin-related modifier 1 (100 aa).

The Ubiquitin-like domain occupies 19–96 (EYIKLKVIGQ…IEVYQEQTGG (78 aa)). Gly-96 is covalently cross-linked (Glycyl lysine isopeptide (Gly-Lys) (interchain with K-? in acceptor proteins)). The propeptide occupies 97–100 (CRND).

This sequence belongs to the ubiquitin family. SUMO subfamily. In terms of assembly, interacts with sae2, ube2i, ranbp2, pias1 and pias2. Covalently attached to a number of proteins. In terms of processing, cleavage of precursor form by a sentrin-specific protease is necessary for function.

Its subcellular location is the nucleus membrane. It is found in the nucleus speckle. It localises to the cytoplasm. The protein localises to the nucleus. The protein resides in the PML body. Its subcellular location is the cell membrane. Functionally, ubiquitin-like protein that can be covalently attached to proteins as a monomer or a lysine-linked polymer. Covalent attachment via an isopeptide bond to its substrates requires prior activation by the E1 complex sae1-sae2 and linkage to the E2 enzyme ube2i. This post-translational modification on lysine residues of proteins plays a crucial role in a number of cellular processes such as nuclear transport, DNA replication and repair, mitosis and signal transduction. Polymeric sumo1 chains are also susceptible to polyubiquitination which functions as a signal for proteasomal degradation of modified proteins. The polypeptide is Small ubiquitin-related modifier 1 (sumo1) (Danio rerio (Zebrafish)).